The chain runs to 288 residues: MAWRDRRGALRAILTGSACVRPASVYDAISIRIADDLGFPFGMFGGSVASLAILGDPDIALITLTELAEQVRRMSRAAALPVVVDADHGYGNALNVRRTVEELEAAGAAGLTIEDTLLPQAYGEAKPQLVSREEGLGKITAALDARRDPNLVIIGRTGACSITSLDDAIERALAYQAAGVDALFFTGVKTRAQLEAISAATTLPIALGSPPAELGDFDHLAERRVRIAVQGHAPIAAATEAVFKTLSAIKDGAAPKALTGLASAELMDKVTRADVVAERGEHFLGVKR.

Ser-47 is a substrate binding site. Residue Asp-85 coordinates Mg(2+). Positions 156 and 232 each coordinate substrate.

This sequence belongs to the isocitrate lyase/PEP mutase superfamily. Oxaloacetate decarboxylase family. Homotetramer; dimer of dimers. Requires Mg(2+) as cofactor.

The enzyme catalyses oxaloacetate + H(+) = pyruvate + CO2. Its function is as follows. Catalyzes the decarboxylation of oxaloacetate into pyruvate. Seems to play a role in maintaining cellular concentrations of bicarbonate and pyruvate. This chain is Oxaloacetate decarboxylase, found in Rhodopseudomonas palustris (strain TIE-1).